The sequence spans 509 residues: Cytochrome P450 monooxygenase FUP2 (509 aa).

Helical transmembrane passes span 16–36 and 224–244; these read FGLALVISALALVSVIIYGCF and MVEALSFFLTLPGIASVFGIA. Residue Cys450 coordinates heme.

It belongs to the cytochrome P450 family. Heme is required as a cofactor.

The protein resides in the membrane. It participates in secondary metabolite biosynthesis. Its function is as follows. Cytochrome P450 monooxygenase; part of the gene cluster that mediates the biosynthesis of the mycotoxin fusaproliferin (FUP) that belongs to the class of bicyclic sesterterpenoids. FUP2 introduces a hydroxyl group at the C-24 position resulting in the formation of preterpestacin IIa, which can be further oxidized. The oxidation of the hydroxyl group at C-24 to an aldehyde and further to a carboxylic group takes place via unspecific alcohol and aldehyde dehydrogenases and leads to the shunt products preterpestacin IIc and preterpestacin IIb, respectively. The FUP biosynthetic pathway starts with the enzyme encoded by FUP1 that combines a C-terminal prenyltransferase domain responsible for the synthesis of geranylgeranyl diphosphate with the N-terminal terpene cyclase domain, to yield preterpestacin I. Preterpestacin I is then decorated by oxygenation steps that are catalyzed by two cytochrome P450 monooxygenases. First, FUP2 introduces a hydroxyl group at the C-24 position resulting in the formation of preterpestacin IIa. The second P450 monooxygenase catalyzes the hydroxylation at C-16 and C-17 of preterpestacin IIa, producing preterpestacin III. Subsequently, the FAD-dependent oxidoreductase FUP4 catalyzes the oxidation of the hydroxy group at the C-16 position to a keto group, leading to the formation of (-)-terpestacin, which is the immediate precursor of FUP. The final step in the proposed biosynthetic pathway is the addition of an acetyl group at the C-24 position of terpestacin, which is catalyzed by the acetyltransferase FUP5. In Fusarium proliferatum (strain ET1) (Orchid endophyte fungus), this protein is Cytochrome P450 monooxygenase FUP2.